A 284-amino-acid polypeptide reads, in one-letter code: Putative thiosulfate sulfurtransferase SseB (284 aa).

Rhodanese domains follow at residues Ala-20 to Thr-138 and Gly-169 to Gly-280. A substrate-binding site is contributed by Arg-183. Residue Cys-241 is the Cysteine persulfide intermediate of the active site.

The catalysed reaction is thiosulfate + hydrogen cyanide = thiocyanate + sulfite + 2 H(+). The protein is Putative thiosulfate sulfurtransferase SseB (sseB) of Mycobacterium tuberculosis (strain CDC 1551 / Oshkosh).